The chain runs to 451 residues: Probable beta-1,4-xylosyltransferase GT43E (451 aa).

Residues 1-88 (MVSSRRNTGG…SKSRGLSCKR (88 aa)) are Cytoplasmic-facing. A helical; Signal-anchor for type II membrane protein transmembrane segment spans residues 89–109 (LAFHLFVCFMVGIFIGFMPFF). Residues 110 to 451 (SVDVSQKIVS…KNLDAVIPVT (342 aa)) are Lumenal-facing. N-linked (GlcNAc...) asparagine glycosylation is found at Asn260 and Asn366.

The protein belongs to the glycosyltransferase 43 family.

Its subcellular location is the golgi apparatus membrane. Probable beta-1,4-xylosyltransferase involved in xylan biosynthesis in cell walls. This chain is Probable beta-1,4-xylosyltransferase GT43E, found in Oryza sativa subsp. japonica (Rice).